The primary structure comprises 509 residues: Maturase K (509 aa).

Belongs to the intron maturase 2 family. MatK subfamily.

Its subcellular location is the plastid. The protein localises to the chloroplast. In terms of biological role, usually encoded in the trnK tRNA gene intron. Probably assists in splicing its own and other chloroplast group II introns. The polypeptide is Maturase K (Vachellia farnesiana (Sweet acacia)).